The sequence spans 271 residues: Putative phosphoenolpyruvate synthase regulatory protein (271 aa).

151 to 158 serves as a coordination point for ADP; that stretch reads GVSRSGKT.

The protein belongs to the pyruvate, phosphate/water dikinase regulatory protein family. PSRP subfamily.

The enzyme catalyses [pyruvate, water dikinase] + ADP = [pyruvate, water dikinase]-phosphate + AMP + H(+). It carries out the reaction [pyruvate, water dikinase]-phosphate + phosphate + H(+) = [pyruvate, water dikinase] + diphosphate. In terms of biological role, bifunctional serine/threonine kinase and phosphorylase involved in the regulation of the phosphoenolpyruvate synthase (PEPS) by catalyzing its phosphorylation/dephosphorylation. In Burkholderia mallei (strain NCTC 10247), this protein is Putative phosphoenolpyruvate synthase regulatory protein.